The primary structure comprises 461 residues: Cysteine--tRNA ligase (461 aa).

Zn(2+) is bound at residue cysteine 29. The 'HIGH' region signature appears at 31-41; that stretch reads MTVYDFCHIGH. Residues cysteine 210, histidine 235, and glutamate 239 each contribute to the Zn(2+) site. The 'KMSKS' region motif lies at 267–271; that stretch reads KMSKS. Lysine 270 is an ATP binding site.

The protein belongs to the class-I aminoacyl-tRNA synthetase family. Monomer. The cofactor is Zn(2+).

It localises to the cytoplasm. It carries out the reaction tRNA(Cys) + L-cysteine + ATP = L-cysteinyl-tRNA(Cys) + AMP + diphosphate. The chain is Cysteine--tRNA ligase from Stutzerimonas stutzeri (strain A1501) (Pseudomonas stutzeri).